The chain runs to 245 residues: Probable phosphatase YcdX (245 aa).

Zn(2+)-binding residues include histidine 7, histidine 9, histidine 15, histidine 40, glutamate 73, histidine 101, histidine 131, aspartate 192, and histidine 194.

This sequence belongs to the PHP family. In terms of assembly, homotrimer. It depends on Zn(2+) as a cofactor.

This Escherichia coli O127:H6 (strain E2348/69 / EPEC) protein is Probable phosphatase YcdX.